The primary structure comprises 1102 residues: Voltage-gated delayed rectifier potassium channel KCNH8 (1102 aa).

Topologically, residues 1-225 (MPVMKGLLAP…HFSTFKAGWD (225 aa)) are cytoplasmic. The region spanning 18-90 (IATRFDGTHS…LQIEKSLEEK (73 aa)) is the PAS domain. A PAC domain is found at 93 to 145 (FKGEIMFYKKNGAPFWCLLDIVPIKNEKGDVVLFLASFKDITDTKVKITSEDK). Residues 226–246 (WLILLATFYVAVTVPYNVCFI) form a helical membrane-spanning segment. Residues 247-255 (GNEDLSTTR) lie on the Extracellular side of the membrane. Residues 256-276 (STTVSDIAVEILFIIDIILNF) traverse the membrane as a helical segment. The Cytoplasmic segment spans residues 277-298 (RTTYVSKSGQVIFEARSICIHY). The chain crosses the membrane as a helical span at residues 299–319 (VTTWFIIDLIAALPFDLLYAF). Asparagine 320 carries N-linked (GlcNAc...) asparagine glycosylation. At 320–327 (NVTVVSLV) the chain is on the extracellular side. Residues 328–348 (HLLKTVRLLRLLRLLQKLDRY) traverse the membrane as a helical; Voltage-sensor segment. Residues 349–353 (SQHST) lie on the Cytoplasmic side of the membrane. Residues 354-374 (IVLTLLMSMFALLAHWMACIW) traverse the membrane as a helical segment. Topologically, residues 375–419 (YVIGKMEREDNSLLKWEVGWLHELGKRLESPYYGNNTLGGPSIRS) are extracellular. Residue asparagine 409 is glycosylated (N-linked (GlcNAc...) asparagine). The pore-forming intramembrane region spans 420–440 (AYIAALYFTLSSLTSVGFGNV). The Selectivity filter motif lies at 434–439 (SVGFGN). The Extracellular portion of the chain corresponds to 441–448 (SANTDAEK). Residues 449-469 (IFSICTMLIGALMHALVFGNV) traverse the membrane as a helical segment. Topologically, residues 470–1102 (TAIIQRMYSR…DVKDSKAINV (633 aa)) are cytoplasmic. The interval 551–668 (LFECASRGCL…HKFVEDIQHD (118 aa)) is cNMP-binding domain. Disordered regions lie at residues 683–744 (SRLS…KTGS), 762–793 (PFHS…KEKN), 818–845 (EDGN…ISPS), and 960–983 (LVGS…LHHS). Acidic residues predominate over residues 710–723 (VEDEEEEEVEEEET). Residues 777–793 (TKQEADPPNHGTRKEKN) show a composition bias toward basic and acidic residues. The segment covering 968–982 (TEAHEQSPVDSELHH) has biased composition (basic and acidic residues).

It belongs to the potassium channel family. H (Eag) (TC 1.A.1.20) subfamily. Kv12.1/KCNH8 sub-subfamily. The potassium channel is probably composed of a homo- or heterotetrameric complex of pore-forming alpha subunits that can associate with modulating beta subunits. In terms of tissue distribution, detected in superior cervical, mesenteric and coeliac ganglia. Expressed in brain (piriform cortex, olfactory tubercle, cerebral cortex, hippocampus pyramidial cells and dentate gyrus and basal ganglia of caudate/putamen and accumbens nucleus). Expressed in pituitary.

The protein resides in the membrane. It carries out the reaction K(+)(in) = K(+)(out). In terms of biological role, pore-forming (alpha) subunit of a voltage-gated delayed rectifier potassium channel that mediates outward-rectifying potassium currents. Elicits a slowly activating, non-inactivating and slowly deactivation outwards potassium current at depolarizating voltages from -30 mV to +50mV. Shows no obvious change in the activation rate from different holding potentials. Activation is strongly dependent on the pH of the external solution. The polypeptide is Voltage-gated delayed rectifier potassium channel KCNH8 (Rattus norvegicus (Rat)).